A 211-amino-acid polypeptide reads, in one-letter code: Glycerol-3-phosphate acyltransferase 2 (211 aa).

The next 5 membrane-spanning stretches (helical) occupy residues 6 to 26 (FASLFILAYLLGSFPAGVVVG), 57 to 77 (IIVFLIDFFKGTLATLIPVIF), 82 to 102 (HYLCLIFGLVAILGHAFPIFL), 124 to 144 (FFLICAVIFIPILFITSMVSL), and 148 to 168 (ISVVLIFIASFFFHDIALSII).

It belongs to the PlsY family. In terms of assembly, probably interacts with PlsX.

It localises to the cell membrane. It catalyses the reaction an acyl phosphate + sn-glycerol 3-phosphate = a 1-acyl-sn-glycero-3-phosphate + phosphate. The protein operates within lipid metabolism; phospholipid metabolism. In terms of biological role, catalyzes the transfer of an acyl group from acyl-phosphate (acyl-PO(4)) to glycerol-3-phosphate (G3P) to form lysophosphatidic acid (LPA). This enzyme utilizes acyl-phosphate as fatty acyl donor, but not acyl-CoA or acyl-ACP. This chain is Glycerol-3-phosphate acyltransferase 2, found in Lactobacillus acidophilus (strain ATCC 700396 / NCK56 / N2 / NCFM).